Here is a 148-residue protein sequence, read N- to C-terminus: D-aminoacyl-tRNA deacylase (148 aa).

A Gly-cisPro motif, important for rejection of L-amino acids motif is present at residues 137-138 (GP).

Belongs to the DTD family. In terms of assembly, homodimer.

The protein resides in the cytoplasm. It carries out the reaction glycyl-tRNA(Ala) + H2O = tRNA(Ala) + glycine + H(+). The catalysed reaction is a D-aminoacyl-tRNA + H2O = a tRNA + a D-alpha-amino acid + H(+). Its function is as follows. An aminoacyl-tRNA editing enzyme that deacylates mischarged D-aminoacyl-tRNAs. Also deacylates mischarged glycyl-tRNA(Ala), protecting cells against glycine mischarging by AlaRS. Acts via tRNA-based rather than protein-based catalysis; rejects L-amino acids rather than detecting D-amino acids in the active site. By recycling D-aminoacyl-tRNA to D-amino acids and free tRNA molecules, this enzyme counteracts the toxicity associated with the formation of D-aminoacyl-tRNA entities in vivo and helps enforce protein L-homochirality. This chain is D-aminoacyl-tRNA deacylase, found in Deinococcus geothermalis (strain DSM 11300 / CIP 105573 / AG-3a).